Reading from the N-terminus, the 923-residue chain is DNA mismatch repair protein PMS1 (923 aa).

Composition is skewed to basic and acidic residues over residues 543-553 (DMTPSERDSEL), 565-581 (NVERHEREHEKPIRFEE), and 591-601 (GDVERVSEDNP). The interval 543 to 603 (DMTPSERDSE…ERVSEDNPRC (61 aa)) is disordered.

Belongs to the DNA mismatch repair MutL/HexB family. In terms of assembly, heterodimer of MLH1 and PMS1, called MutLalpha, which is the major MMR MutL activity correcting base-base mismatches as well as IDLs. The heterodimer binds double strand DNA independently of a mismatch with positive cooperativity and has more than one DNA binding site. Forms a ternary complex with either the MSH2-MSH6 (MutSalpha) or the MSH2-MSH3 heterodimer (MutSbeta), which recognize and bind to mismatch DNA. Ternary complex formation is promoted by ATP binding. Expressed at very low levels in mature leaves. Detected in rapidly dividing tissues.

It is found in the nucleus. In terms of biological role, required for DNA mismatch repair (MMR), correcting base-base mismatches and insertion-deletion loops (IDLs) resulting from DNA replication, DNA damage or from recombination events between non-identical sequences during meiosis. Component of the MutLalpha heterodimer that forms a ternary complex with the MutS heterodimers, which initially recognize the DNA mismatches. This complex is thought to be responsible for directing the downstream MMR events, including strand discrimination, excision, and resynthesis. Plays a major role in maintaining the genetic stability of simple sequence repeats and in the repair of heteroduplex sites present in meiotic recombination intermediates. Does not seem to be required for homologous somatic recombination. The sequence is that of DNA mismatch repair protein PMS1 (PMS1) from Arabidopsis thaliana (Mouse-ear cress).